A 327-amino-acid polypeptide reads, in one-letter code: tRNA dimethylallyltransferase (327 aa).

Gly18–Thr25 is a binding site for ATP. Thr20–Thr25 is a binding site for substrate. Interaction with substrate tRNA regions lie at residues Asp43–Leu46, Gln167–Arg171, and Arg251–Arg256.

Belongs to the IPP transferase family. Monomer. Mg(2+) is required as a cofactor.

It carries out the reaction adenosine(37) in tRNA + dimethylallyl diphosphate = N(6)-dimethylallyladenosine(37) in tRNA + diphosphate. Catalyzes the transfer of a dimethylallyl group onto the adenine at position 37 in tRNAs that read codons beginning with uridine, leading to the formation of N6-(dimethylallyl)adenosine (i(6)A). In Methylibium petroleiphilum (strain ATCC BAA-1232 / LMG 22953 / PM1), this protein is tRNA dimethylallyltransferase.